Here is a 148-residue protein sequence, read N- to C-terminus: UPF0260 protein ECA2365 (148 aa).

This sequence belongs to the UPF0260 family.

The polypeptide is UPF0260 protein ECA2365 (Pectobacterium atrosepticum (strain SCRI 1043 / ATCC BAA-672) (Erwinia carotovora subsp. atroseptica)).